The sequence spans 380 residues: MLKLEQVSKVYKGGKKAVNSIDLDIAKGEFICFIGPSGCGKTTTMKMINRLIEPSSGRIFIDGENIMEQDPVELRRKIGYVIQQIGLFPHMTIQQNISLVPKLLKWPEEKRKERARELLKLVDMGPEYLDRYPHELSGGQQQRIGVLRALAAEPPLILMDEPFGALDPITRDSLQEEFKKLQRTLNKTIVFVTHDMDEAIKLADRIVILKAGEIVQVGTPDEILRNPANEFVEEFIGKERLIQSRPDIERVEQMMNRTPVTVSADKTLSQAIQLMREKRVDSLLVVDRQNVLKGYVDVEMIDQNRKKASIVGDVYRSDIYTVQKGALLRDTVRKILKQGIKYVPVVDEQNHLAGIVTRASLVDIVYDSIWGDEENQLMTI.

Residues 2-236 form the ABC transporter domain; sequence LKLEQVSKVY…PANEFVEEFI (235 aa). 35–42 is an ATP binding site; that stretch reads GPSGCGKT. 2 consecutive CBS domains span residues 255–314 and 315–373; these read MNRT…VGDV and YRSD…WGDE.

It belongs to the ABC transporter superfamily. The complex is composed of two ATP-binding proteins (OpuCA), two transmembrane proteins (OpuCB and OpuCD) and a solute-binding protein (OpuCC).

Its activity is regulated as follows. Binds cyclic di-AMP (c-di-AMP), which may regulate the transporter activity. Its function is as follows. Involved in a high affinity multicomponent binding-protein-dependent transport system for glycine betaine, carnitine and choline; probably responsible for energy coupling to the transport system. The protein is Glycine betaine/carnitine/choline transport ATP-binding protein OpuCA (opuCA) of Bacillus subtilis (strain 168).